We begin with the raw amino-acid sequence, 332 residues long: Ribosomal RNA small subunit methyltransferase H (332 aa).

Residues 38–40 (GGY), Asp56, Phe83, Asp104, and Gln111 contribute to the S-adenosyl-L-methionine site. Positions 309–332 (TETPFSEDISRPDTHIPRSRRQSA) are disordered.

The protein belongs to the methyltransferase superfamily. RsmH family.

Its subcellular location is the cytoplasm. The catalysed reaction is cytidine(1402) in 16S rRNA + S-adenosyl-L-methionine = N(4)-methylcytidine(1402) in 16S rRNA + S-adenosyl-L-homocysteine + H(+). Functionally, specifically methylates the N4 position of cytidine in position 1402 (C1402) of 16S rRNA. The polypeptide is Ribosomal RNA small subunit methyltransferase H (Zymomonas mobilis subsp. mobilis (strain ATCC 31821 / ZM4 / CP4)).